An 877-amino-acid chain; its full sequence is Phosphoenolpyruvate carboxylase (877 aa).

Active-site residues include histidine 137 and lysine 544.

It belongs to the PEPCase type 1 family. Requires Mg(2+) as cofactor.

The enzyme catalyses oxaloacetate + phosphate = phosphoenolpyruvate + hydrogencarbonate. Its function is as follows. Forms oxaloacetate, a four-carbon dicarboxylic acid source for the tricarboxylic acid cycle. In Edwardsiella ictaluri (strain 93-146), this protein is Phosphoenolpyruvate carboxylase.